The following is a 478-amino-acid chain: 5-hydroxytryptamine receptor 3A (478 aa).

Residues 1 to 23 (MLLWVQQALLALLLPTLLAQGEA) form the signal peptide. Residues 24 to 241 (RRSRNTTRPA…MKFYVVIRRR (218 aa)) lie on the Extracellular side of the membrane. N-linked (GlcNAc...) asparagine glycosylation is found at Asn28, Asn104, Asn170, and Asn186. A disulfide bridge links Cys157 with Cys171. A helical transmembrane segment spans residues 242–268 (PLFYVVSLLLPSIFLMVMDIVGFYLPP). The Cytoplasmic segment spans residues 269–273 (NSGER). Residues 274-292 (VSFKITLLLGYSVFLIIVS) form a helical membrane-spanning segment. Topologically, residues 293–302 (DTLPATAIGT) are extracellular. A helical transmembrane segment spans residues 303 to 321 (PLIGVYFVVCMALLVISLA). Residues 322-455 (ETIFIVRLVH…GSVLDKLLFH (134 aa)) are Cytoplasmic-facing. Residues 389–408 (GGPQDFEKSPRDRCSPPPPP) are disordered. The segment covering 393 to 402 (DFEKSPRDRC) has biased composition (basic and acidic residues). Residues 414–450 (AVCGLLQELSSIRQFLEKRDEIREVARDWLRVGSVLD) are HA-stretch; determines single-channel conductance in 5-HT3 receptors. The helical transmembrane segment at 456 to 475 (IYLLAVLAYSITLVMLWSIW) threads the bilayer. Topologically, residues 476–478 (QYA) are extracellular.

Belongs to the ligand-gated ion channel (TC 1.A.9) family. 5-hydroxytryptamine receptor (TC 1.A.9.2) subfamily. HTR3A sub-subfamily. Forms homopentameric as well as heteropentameric serotonin-activated cation-selective channel complexes with HTR3B or HTR3C or HTR3D or HTR3E. The homomeric complex is functional but exhibits low conductance with modified voltage dependence, and decreased agonist and antagonist affinity. Heteropentameric complexes display properties which resemble that of neuronal serotonin-activated channels in vivo. Interacts with RIC3. As to expression, expressed in cerebral cortex, amygdala, hippocampus, and testis. Detected in monocytes of the spleen and tonsil, in small and large intestine, uterus, prostate, ovary and placenta.

Its subcellular location is the postsynaptic cell membrane. It localises to the cell membrane. The enzyme catalyses Na(+)(in) = Na(+)(out). It carries out the reaction K(+)(in) = K(+)(out). The catalysed reaction is Ca(2+)(in) = Ca(2+)(out). It catalyses the reaction Mg(2+)(in) = Mg(2+)(out). Functionally, forms serotonin (5-hydroxytryptamine/5-HT3)-activated cation-selective channel complexes, which when activated cause fast, depolarizing responses in neurons. This is 5-hydroxytryptamine receptor 3A from Homo sapiens (Human).